Reading from the N-terminus, the 347-residue chain is MITERQRQILNLIVSLYAKDHTPIGSKSLLDSIQASSATIRNDMKALERLGLIQKEHTSSGRIPSVSGYKYFVENVIQLEEFSQNDLFKVMKAFDGDFYRLSDLFKTAAKSLSELTGLTSFVLNAPQRDQQLVSFEMVILDNHSVLSVITLGTGEVRTNQFILPKSMTEADLAVFSNLVKERLVGKKVIDIHYTLRTEIPQIVQRYFKVTSEVLQLFESIFDDLFKEHLTVAGRKNIFDYATDNLAELYKLFSDDERMLHEIREITNNDEMRAVKFDNDEKFMKNLTIISQKFVIPYRGFGTLTVVGPVEMDYQRTLSVLDLVAKVLTMKLSDYYRYLDGNHYEISK.

Belongs to the HrcA family.

Functionally, negative regulator of class I heat shock genes (grpE-dnaK-dnaJ and groELS operons). Prevents heat-shock induction of these operons. The chain is Heat-inducible transcription repressor HrcA from Lactococcus lactis subsp. cremoris (strain SK11).